The sequence spans 199 residues: 5'-deoxynucleotidase YfbR (199 aa).

Substrate contacts are provided by residues 18–19 (RW) and His33. In terms of domain architecture, HD spans 30-142 (VSEHSLQVAM…VKQADALCAY (113 aa)). A divalent metal cation is bound by residues His33, His68, and Asp69. Residues Asp69, 77-80 (DLPT), and Asp137 each bind substrate. Asp137 contacts a divalent metal cation.

This sequence belongs to the 5DNU family. In terms of assembly, homodimer. A divalent metal cation is required as a cofactor.

The protein resides in the cytoplasm. The catalysed reaction is a 2'-deoxyribonucleoside 5'-phosphate + H2O = a 2'-deoxyribonucleoside + phosphate. In terms of biological role, catalyzes the strictly specific dephosphorylation of 2'-deoxyribonucleoside 5'-monophosphates. The chain is 5'-deoxynucleotidase YfbR from Escherichia coli (strain K12 / MC4100 / BW2952).